The chain runs to 283 residues: MSRPPVVARTLPALRRALAELRKRNASVALVPTMGALHDGHLSLVRLAKRRADKVVVSVFVNPTQFAPHEDFGSYPRTFKADASKLAEENVDLIWNPDVKVMYPEGFASKILTEAPAVAGLEDSFRPHFFGGVTTVVGKLFIQCRPDVAIFGSKDFQQLRVVTRMAADLDLGVKVIGAPTVRERDGLAMSSRNVYLSAEERAIAPTLYRAMKEVAKRIKAGKTIASSLTAGAELITEAGFVLDYLEARHAETLAPIKSPKEGPIRLLVAAKLGKTRLIDNIAV.

34-41 (MGALHDGH) is a binding site for ATP. Catalysis depends on His41, which acts as the Proton donor. A (R)-pantoate-binding site is contributed by Gln65. Gln65 provides a ligand contact to beta-alanine. An ATP-binding site is contributed by 152 to 155 (GSKD). Gln158 serves as a coordination point for (R)-pantoate. Residues Val181 and 189 to 192 (MSSR) contribute to the ATP site.

This sequence belongs to the pantothenate synthetase family. Homodimer.

Its subcellular location is the cytoplasm. It carries out the reaction (R)-pantoate + beta-alanine + ATP = (R)-pantothenate + AMP + diphosphate + H(+). Its pathway is cofactor biosynthesis; (R)-pantothenate biosynthesis; (R)-pantothenate from (R)-pantoate and beta-alanine: step 1/1. Functionally, catalyzes the condensation of pantoate with beta-alanine in an ATP-dependent reaction via a pantoyl-adenylate intermediate. This chain is Pantothenate synthetase, found in Rhodopseudomonas palustris (strain ATCC BAA-98 / CGA009).